The following is a 137-amino-acid chain: Cytochrome c-type biogenesis protein CcmE (137 aa).

The Cytoplasmic portion of the chain corresponds to 1 to 8; that stretch reads MQKGAKNR. The chain crosses the membrane as a helical; Signal-anchor for type II membrane protein span at residues 9–29; it reads LITIIICFCSAVIGVSIILYN. The Periplasmic portion of the chain corresponds to 30–137; it reads LEKSIVFFVP…NTVIPAKAGI (108 aa). Heme-binding residues include histidine 120 and tyrosine 124.

Belongs to the CcmE/CycJ family.

The protein resides in the cell inner membrane. Its function is as follows. Heme chaperone required for the biogenesis of c-type cytochromes. Transiently binds heme delivered by CcmC and transfers the heme to apo-cytochromes in a process facilitated by CcmF and CcmH. The polypeptide is Cytochrome c-type biogenesis protein CcmE (Rickettsia bellii (strain OSU 85-389)).